Here is a 101-residue protein sequence, read N- to C-terminus: ATP-dependent Clp protease adapter protein ClpS (101 aa).

This sequence belongs to the ClpS family. Binds to the N-terminal domain of the chaperone ClpA.

In terms of biological role, involved in the modulation of the specificity of the ClpAP-mediated ATP-dependent protein degradation. The polypeptide is ATP-dependent Clp protease adapter protein ClpS (Corynebacterium efficiens (strain DSM 44549 / YS-314 / AJ 12310 / JCM 11189 / NBRC 100395)).